A 716-amino-acid chain; its full sequence is Mitochondrial Rho GTPase 1 (716 aa).

Residues 1-692 are Cytoplasmic-facing; that stretch reads MSPDAIRVVV…VSVDQDDIKH (692 aa). In terms of domain architecture, Miro 1 spans 3 to 224; that stretch reads PDAIRVVVCG…FYLCQRAVTH (222 aa). Positions 58-99 are disordered; that stretch reads NDQDHHHHHQSSPSTMKNKRKHNNKRERERERESSINNVQPN. Residues 84–91, 113–115, and 167–170 each bind GTP; these read ERERERES, DTS, and NKSD. The 36-residue stretch at 240 to 275 folds into the EF-hand 1 domain; it reads GAIKPLKRIFWLSDTDQDGYLNFEELSELHKKCFGI. Residues D253, D255, D257, Y259, and E264 each coordinate Ca(2+). The disordered stretch occupies residues 303–327; the sequence is TQTPPQQQHLATSAGTPNGTTTTTS. One can recognise an EF-hand 2 domain in the interval 388–423; that stretch reads TGYKFFVDLFIKFDKDNDGGLNEDELNTLFRSTPGI. Ca(2+) is bound by residues D401, D403, D405, and E412. Positions 505 to 671 constitute a Miro 2 domain; the sequence is RNVFNCFIVG…FIQLVDAAKT (167 aa). GTP contacts are provided by residues 514 to 521, 550 to 554, and 620 to 623; these read GAPKAGKS, ELRGG, and LKAD. The helical; Anchor for type IV membrane protein transmembrane segment at 693–713 threads the bilayer; the sequence is IIMTGAAIAVVGLVSIWVLNS. The Mitochondrial intermembrane segment spans residues 714–716; that stretch reads LRR.

Belongs to the mitochondrial Rho GTPase family.

Its subcellular location is the mitochondrion outer membrane. Mitochondrial GTPase involved in mitochondrial trafficking. Probably involved in control of anterograde transport of mitochondria and their subcellular distribution. The chain is Mitochondrial Rho GTPase 1 (GEM1) from Candida albicans (strain SC5314 / ATCC MYA-2876) (Yeast).